Here is a 148-residue protein sequence, read N- to C-terminus: SsrA-binding protein (148 aa).

The disordered stretch occupies residues 124 to 148 (QFDKRETEKDRDWQREKARLMREKA).

It belongs to the SmpB family.

The protein resides in the cytoplasm. In terms of biological role, required for rescue of stalled ribosomes mediated by trans-translation. Binds to transfer-messenger RNA (tmRNA), required for stable association of tmRNA with ribosomes. tmRNA and SmpB together mimic tRNA shape, replacing the anticodon stem-loop with SmpB. tmRNA is encoded by the ssrA gene; the 2 termini fold to resemble tRNA(Ala) and it encodes a 'tag peptide', a short internal open reading frame. During trans-translation Ala-aminoacylated tmRNA acts like a tRNA, entering the A-site of stalled ribosomes, displacing the stalled mRNA. The ribosome then switches to translate the ORF on the tmRNA; the nascent peptide is terminated with the 'tag peptide' encoded by the tmRNA and targeted for degradation. The ribosome is freed to recommence translation, which seems to be the essential function of trans-translation. In Ralstonia pickettii (strain 12J), this protein is SsrA-binding protein.